We begin with the raw amino-acid sequence, 329 residues long: RING finger protein 225 (329 aa).

The interval 1–55 (MPCPRPFWLRHSRAPQGSGPSSPGSLSAPRSPSRGEDQEEEEEEEGDGSPGSGPI) is disordered. Residues 14–32 (APQGSGPSSPGSLSAPRSP) are compositionally biased toward low complexity. A compositionally biased stretch (acidic residues) spans 37-47 (DQEEEEEEEGD). The RING-type zinc finger occupies 64-112 (CLICVSSFDGVFKLPKRLDCGHVFCLECLARLSLATAGGGNAVACPVCR). Residues 122-181 (GLPALPTQSGLLPRDARAPPSRQGSVRFDRRRGLLYLRPPPPPPGPRKARAPPPPPPLRL) are disordered. Residues 159–179 (RPPPPPPGPRKARAPPPPPPL) are compositionally biased toward pro residues. A helical membrane pass occupies residues 203–223 (ALAVLVAAGLVVSGVYIFFLI). The tract at residues 248–329 (FPPRPPPGSP…RGARRLWGSQ (82 aa)) is disordered. Residues 281–293 (DALEPEAGPEDPA) are compositionally biased toward acidic residues. The span at 294-304 (EAERTLDRRSD) shows a compositional bias: basic and acidic residues.

Its subcellular location is the membrane. The polypeptide is RING finger protein 225 (Homo sapiens (Human)).